The chain runs to 239 residues: Uridylate kinase (239 aa).

13–16 (KLSG) serves as a coordination point for ATP. Gly-55 contacts UMP. ATP is bound by residues Gly-56 and Arg-60. Residues Asp-75 and 136-143 (TGNPFFTT) each bind UMP. Residues Thr-163, Asn-164, Tyr-169, and Asp-172 each coordinate ATP.

It belongs to the UMP kinase family. Homohexamer.

It localises to the cytoplasm. It catalyses the reaction UMP + ATP = UDP + ADP. Its pathway is pyrimidine metabolism; CTP biosynthesis via de novo pathway; UDP from UMP (UMPK route): step 1/1. Inhibited by UTP. Functionally, catalyzes the reversible phosphorylation of UMP to UDP. This Neisseria meningitidis serogroup C / serotype 2a (strain ATCC 700532 / DSM 15464 / FAM18) protein is Uridylate kinase.